Reading from the N-terminus, the 892-residue chain is DNA mismatch repair protein MutS (892 aa).

607 to 614 lines the ATP pocket; that stretch reads GPNMSGKS.

The protein belongs to the DNA mismatch repair MutS family.

In terms of biological role, this protein is involved in the repair of mismatches in DNA. It is possible that it carries out the mismatch recognition step. This protein has a weak ATPase activity. In Bacillus cereus (strain AH820), this protein is DNA mismatch repair protein MutS.